The following is a 485-amino-acid chain: E-selectin (485 aa).

The signal sequence occupies residues methionine 1–threonine 22. Positions tryptophan 23–tyrosine 140 constitute a C-type lectin domain. The Extracellular portion of the chain corresponds to tryptophan 23–proline 430. 15 cysteine pairs are disulfide-bonded: cysteine 41-cysteine 139, cysteine 112-cysteine 131, cysteine 144-cysteine 155, cysteine 149-cysteine 164, cysteine 166-cysteine 175, cysteine 181-cysteine 224, cysteine 194-cysteine 206, cysteine 210-cysteine 237, cysteine 242-cysteine 286, cysteine 255-cysteine 268, cysteine 272-cysteine 299, cysteine 304-cysteine 349, cysteine 335-cysteine 362, cysteine 367-cysteine 408, and cysteine 394-cysteine 421. Residues asparagine 61, asparagine 79, and asparagine 88 are each glycosylated (N-linked (GlcNAc...) asparagine). Residues glutamate 102, asparagine 104, and glutamate 110 each contribute to the Ca(2+) site. Residues glutamate 102 to glutamate 110, glutamate 114 to arginine 119, and asparagine 127 to glutamate 129 contribute to the a carbohydrate site. Ca(2+) is bound by residues asparagine 127 and aspartate 128. The EGF-like domain maps to lysine 141–glutamate 176. Asparagine 161 carries an N-linked (GlcNAc...) asparagine glycan. Sushi domains lie at valine 179–valine 239, valine 240–alanine 301, valine 302–valine 364, and valine 365–alanine 423. N-linked (GlcNAc...) asparagine glycosylation is present at asparagine 203. Residue asparagine 265 is glycosylated (N-linked (GlcNAc...) asparagine). N-linked (GlcNAc...) asparagine glycosylation is found at asparagine 312 and asparagine 316. N-linked (GlcNAc...) asparagine glycosylation is found at asparagine 379 and asparagine 401. A helical transmembrane segment spans residues leucine 431–leucine 453. Residues lysine 454–isoleucine 485 lie on the Cytoplasmic side of the membrane. The disordered stretch occupies residues alanine 466–isoleucine 485.

The protein belongs to the selectin/LECAM family. Interacts with SELPLG/PSGL1 and PODXL2 through the sialyl Lewis X epitope. SELPLG sulfation appears not to be required for this interaction.

It is found in the cell membrane. Its function is as follows. Cell-surface glycoprotein having a role in immunoadhesion. Mediates in the adhesion of blood neutrophils in cytokine-activated endothelium through interaction with SELPLG/PSGL1. May have a role in capillary morphogenesis. The polypeptide is E-selectin (SELE) (Bos taurus (Bovine)).